The chain runs to 767 residues: DNA topoisomerase 1 (767 aa).

A compositionally biased stretch (basic and acidic residues) spans 1-23; that stretch reads MSGDHLHNDSQIEADFRLNDSHK. The disordered stretch occupies residues 1–201; the sequence is MSGDHLHNDS…NKKKKPKKEE (201 aa). N-acetylserine is present on S2. 2 positions are modified to phosphoserine: S2 and S10. Residues 24–39 are compositionally biased toward basic residues; the sequence is HKDKHKDREHRHKEHK. The span at 40-110 shows a compositional bias: basic and acidic residues; sequence KDKDKDREKS…DAKIKKEKEN (71 aa). S59 is subject to Phosphoserine. Residue K103 forms a Glycyl lysine isopeptide (Lys-Gly) (interchain with G-Cter in SUMO2) linkage. K105 participates in a covalent cross-link: Glycyl lysine isopeptide (Lys-Gly) (interchain with G-Cter in SUMO); alternate. K105 is covalently cross-linked (Glycyl lysine isopeptide (Lys-Gly) (interchain with G-Cter in SUMO2); alternate). The residue at position 114 (S114) is a Phosphoserine. K119 participates in a covalent cross-link: Glycyl lysine isopeptide (Lys-Gly) (interchain with G-Cter in SUMO); alternate. Residue K119 forms a Glycyl lysine isopeptide (Lys-Gly) (interchain with G-Cter in SUMO2); alternate linkage. Residue K119 forms a Glycyl lysine isopeptide (Lys-Gly) (interchain with G-Cter in SUMO1); alternate linkage. Over residues 131–168 the composition is skewed to basic and acidic residues; sequence PKEDIKPLKRLRDEDDADYKPKKIKTEDIKKEKKRKSE. Glycyl lysine isopeptide (Lys-Gly) (interchain with G-Cter in SUMO2) cross-links involve residues K136 and K150. K155 is covalently cross-linked (Glycyl lysine isopeptide (Lys-Gly) (interchain with G-Cter in SUMO); alternate). K155 is covalently cross-linked (Glycyl lysine isopeptide (Lys-Gly) (interchain with G-Cter in SUMO2); alternate). Glycyl lysine isopeptide (Lys-Gly) (interchain with G-Cter in SUMO2) cross-links involve residues K160 and K166. Residue K174 forms a Glycyl lysine isopeptide (Lys-Gly) (interchain with G-Cter in SUMO2); alternate linkage. Position 174 is an N6-acetyllysine; alternate (K174). Basic and acidic residues predominate over residues 181 to 201; the sequence is KDKDKKVAEPDNKKKKPKKEE. K206 participates in a covalent cross-link: Glycyl lysine isopeptide (Lys-Gly) (interchain with G-Cter in SUMO2). Residue K282 is modified to N6-acetyllysine. A Glycyl lysine isopeptide (Lys-Gly) (interchain with G-Cter in SUMO2) cross-link involves residue K338. Interaction with DNA stretches follow at residues 427–428 and 490–495; these read KY and RAGNEK. The Topo IB-type catalytic domain occupies 434–767; that stretch reads SSRIKGEKDW…IDMTDEDYEF (334 aa). S508 is modified (phosphoserine; by CK2). K551 participates in a covalent cross-link: Glycyl lysine isopeptide (Lys-Gly) (interchain with G-Cter in SUMO2). The segment at 587–589 is interaction with DNA; the sequence is TAK. Glycyl lysine isopeptide (Lys-Gly) (interchain with G-Cter in SUMO2) cross-links involve residues K644, K702, and K714. The active-site O-(3'-phospho-DNA)-tyrosine intermediate is Y725.

The protein belongs to the type IB topoisomerase family. In terms of assembly, monomer. Interacts with ERCC6. Interacts with TPRN; TPRN interacts with a number of DNA damage response proteins, is recruited to sites of DNA damage and may play a role in DNA damage repair. Sumoylated. Lys-119 is the main site of sumoylation. Sumoylation plays a role in partitioning TOP1 between nucleoli and nucleoplasm. Levels are dramatically increased on camptothecin (CPT) treatment. Post-translationally, phosphorylation at Ser-508 by CK2 increases binding to supercoiled DNA and sensitivity to camptothecin.

The protein localises to the nucleus. It is found in the nucleolus. Its subcellular location is the nucleoplasm. It carries out the reaction ATP-independent breakage of single-stranded DNA, followed by passage and rejoining.. Releases the supercoiling and torsional tension of DNA introduced during the DNA replication and transcription by transiently cleaving and rejoining one strand of the DNA duplex. Introduces a single-strand break via transesterification at a target site in duplex DNA. The scissile phosphodiester is attacked by the catalytic tyrosine of the enzyme, resulting in the formation of a DNA-(3'-phosphotyrosyl)-enzyme intermediate and the expulsion of a 5'-OH DNA strand. The free DNA strand then rotates around the intact phosphodiester bond on the opposing strand, thus removing DNA supercoils. Finally, in the religation step, the DNA 5'-OH attacks the covalent intermediate to expel the active-site tyrosine and restore the DNA phosphodiester backbone. Regulates the alternative splicing of tissue factor (F3) pre-mRNA in endothelial cells. Involved in the circadian transcription of the core circadian clock component BMAL1 by altering the chromatin structure around the ROR response elements (ROREs) on the BMAL1 promoter. In Mus musculus (Mouse), this protein is DNA topoisomerase 1 (Top1).